The sequence spans 151 residues: Nascent polypeptide-associated complex subunit beta (151 aa).

Disordered stretches follow at residues 1–38 (MDPS…AADD) and 123–151 (KVSE…DEQD). Basic residues predominate over residues 20–29 (TPRRKVKKPS). Residues 35 to 100 (AADDKKVQGA…AEEKTLSEIL (66 aa)) form the NAC-A/B domain.

The protein belongs to the NAC-beta family. Part of the nascent polypeptide-associated complex (NAC), consisting of ucp15 and btf3. NAC associates with ribosomes via btf3.

The protein localises to the cytoplasm. The protein resides in the nucleus. Component of the nascent polypeptide-associated complex (NAC), a dynamic component of the ribosomal exit tunnel, protecting the emerging polypeptides from interaction with other cytoplasmic proteins to ensure appropriate nascent protein targeting. The NAC complex also promotes mitochondrial protein import by enhancing productive ribosome interactions with the outer mitochondrial membrane and blocks the inappropriate interaction of ribosomes translating non-secretory nascent polypeptides with translocation sites in the membrane of the endoplasmic reticulum. EGD1 may act as a transcription factor that exert a negative effect on the expression of several genes that are transcribed by RNA polymerase II. The protein is Nascent polypeptide-associated complex subunit beta (btf3) of Schizosaccharomyces pombe (strain 972 / ATCC 24843) (Fission yeast).